Consider the following 415-residue polypeptide: 3-isopropylmalate dehydratase large subunit (415 aa).

Residues Cys297, Cys355, and Cys358 each coordinate [4Fe-4S] cluster.

Belongs to the aconitase/IPM isomerase family. LeuC type 2 subfamily. In terms of assembly, heterodimer of LeuC and LeuD. The cofactor is [4Fe-4S] cluster.

It catalyses the reaction (2R,3S)-3-isopropylmalate = (2S)-2-isopropylmalate. It functions in the pathway amino-acid biosynthesis; L-leucine biosynthesis; L-leucine from 3-methyl-2-oxobutanoate: step 2/4. Its function is as follows. Catalyzes the isomerization between 2-isopropylmalate and 3-isopropylmalate, via the formation of 2-isopropylmaleate. The sequence is that of 3-isopropylmalate dehydratase large subunit from Caldivirga maquilingensis (strain ATCC 700844 / DSM 13496 / JCM 10307 / IC-167).